Reading from the N-terminus, the 651-residue chain is Acetyl-coenzyme A synthetase (651 aa).

CoA-binding positions include 189–192 (RGGK), threonine 311, and asparagine 335. ATP contacts are provided by residues 387–389 (GEP), 411–416 (DTWWQT), aspartate 500, and arginine 515. Serine 523 is a CoA binding site. An ATP-binding site is contributed by arginine 526. Positions 537, 539, and 542 each coordinate Mg(2+). Residue arginine 586 participates in CoA binding. Lysine 611 is modified (N6-acetyllysine).

The protein belongs to the ATP-dependent AMP-binding enzyme family. Mg(2+) serves as cofactor. Post-translationally, acetylated. Deacetylation by the SIR2-homolog deacetylase activates the enzyme.

It carries out the reaction acetate + ATP + CoA = acetyl-CoA + AMP + diphosphate. Functionally, catalyzes the conversion of acetate into acetyl-CoA (AcCoA), an essential intermediate at the junction of anabolic and catabolic pathways. AcsA undergoes a two-step reaction. In the first half reaction, AcsA combines acetate with ATP to form acetyl-adenylate (AcAMP) intermediate. In the second half reaction, it can then transfer the acetyl group from AcAMP to the sulfhydryl group of CoA, forming the product AcCoA. In Brucella suis (strain ATCC 23445 / NCTC 10510), this protein is Acetyl-coenzyme A synthetase.